Here is a 242-residue protein sequence, read N- to C-terminus: Orotidine 5'-phosphate decarboxylase (242 aa).

Substrate contacts are provided by residues Asp16, Lys37, 64–73 (DLKFHDIPNT), Thr128, Arg190, Gln199, Gly219, and Arg220. Lys66 functions as the Proton donor in the catalytic mechanism.

The protein belongs to the OMP decarboxylase family. Type 1 subfamily. As to quaternary structure, homodimer.

It carries out the reaction orotidine 5'-phosphate + H(+) = UMP + CO2. Its pathway is pyrimidine metabolism; UMP biosynthesis via de novo pathway; UMP from orotate: step 2/2. Functionally, catalyzes the decarboxylation of orotidine 5'-monophosphate (OMP) to uridine 5'-monophosphate (UMP). This is Orotidine 5'-phosphate decarboxylase from Prochlorococcus marinus (strain MIT 9312).